We begin with the raw amino-acid sequence, 314 residues long: Aspartate carbamoyltransferase catalytic subunit (314 aa).

Positions 53 and 54 each coordinate carbamoyl phosphate. Residue lysine 82 participates in L-aspartate binding. The carbamoyl phosphate site is built by arginine 103, histidine 131, and glutamine 134. 2 residues coordinate L-aspartate: arginine 164 and arginine 230. The carbamoyl phosphate site is built by leucine 267 and proline 268.

Belongs to the aspartate/ornithine carbamoyltransferase superfamily. ATCase family. In terms of assembly, heterooligomer of catalytic and regulatory chains.

It catalyses the reaction carbamoyl phosphate + L-aspartate = N-carbamoyl-L-aspartate + phosphate + H(+). It participates in pyrimidine metabolism; UMP biosynthesis via de novo pathway; (S)-dihydroorotate from bicarbonate: step 2/3. In terms of biological role, catalyzes the condensation of carbamoyl phosphate and aspartate to form carbamoyl aspartate and inorganic phosphate, the committed step in the de novo pyrimidine nucleotide biosynthesis pathway. The sequence is that of Aspartate carbamoyltransferase catalytic subunit from Methanococcus aeolicus (strain ATCC BAA-1280 / DSM 17508 / OCM 812 / Nankai-3).